The sequence spans 255 residues: Syntaxin-6 (255 aa).

S2 carries the post-translational modification N-acetylserine. S2 carries the phosphoserine modification. The required for interaction with VPS51 stretch occupies residues 2-168; sequence SMEDPFFVVK…QAQQQLIVEQ (167 aa). Residues 2-234 lie on the Cytoplasmic side of the membrane; that stretch reads SMEDPFFVVK…VSHMTSDRRQ (233 aa). A coiled-coil region spans residues 41 to 74; it reads EEIDWTTNELRNNLRSIEWDLEDLDETISIVEAN. Phosphoserine is present on residues S129 and S152. In terms of domain architecture, t-SNARE coiled-coil homology spans 163–225; sequence QLIVEQQDEQ…DNVMKKLAKV (63 aa). Residues 235 to 255 traverse the membrane as a helical; Anchor for type IV membrane protein segment; that stretch reads WCAIAILFAVLLVVLILFLVL.

This sequence belongs to the syntaxin family. In terms of assembly, identified in a complex containing STX6, STX12, VAMP4 and VTI1A. Binds EEA1. Interacts with VPS45A. Interacts with MARCHF2; the interaction promotes MARCHF2-mediated ubiquitination and degradation of CFTR. Interacts with MARCHF3. Interacts with GOPC. Interacts with BLTP3B (via C-terminal coiled-coil domain). Interacts with BAIAP3; this interaction is increased in the presence of calcium. Interacts with VPS13B.

The protein localises to the golgi apparatus membrane. It localises to the golgi apparatus. The protein resides in the trans-Golgi network membrane. It is found in the recycling endosome membrane. Its function is as follows. SNARE promoting movement of transport vesicles to target membranes. Targets endosomes to the trans-Golgi network, and may therefore function in retrograde trafficking. Together with SNARE STX12, promotes movement of vesicles from endosomes to the cell membrane, and may therefore function in the endocytic recycling pathway. This is Syntaxin-6 (STX6) from Homo sapiens (Human).